A 138-amino-acid polypeptide reads, in one-letter code: Small ribosomal subunit protein uS11c (138 aa).

The disordered stretch occupies residues 1 to 23; it reads MAKPILRIGSRKNTRSGSRKNVR. Positions 9-23 are enriched in basic residues; sequence GSRKNTRSGSRKNVR.

It belongs to the universal ribosomal protein uS11 family. As to quaternary structure, part of the 30S ribosomal subunit.

It is found in the plastid. Its subcellular location is the chloroplast. The polypeptide is Small ribosomal subunit protein uS11c (Crucihimalaya wallichii (Rock-cress)).